We begin with the raw amino-acid sequence, 70 residues long: Small ribosomal subunit protein bS21A (70 aa).

Belongs to the bacterial ribosomal protein bS21 family.

The sequence is that of Small ribosomal subunit protein bS21A (rpsU1) from Burkholderia mallei (strain ATCC 23344).